Reading from the N-terminus, the 31-residue chain is Cyclotide vibi-H (31 aa).

The cyclopeptide (Gly-Asn) cross-link spans 1–31 (GLLPCAESCVYIPCLTTVIGCSCKSKVCYKN). 3 cysteine pairs are disulfide-bonded: C5-C21, C9-C23, and C14-C28.

This is a cyclic peptide.

Probably participates in a plant defense mechanism. Has cytotoxic activity, active against a human lymphoma cell line with an IC(50) of 1.6 uM. This Viola biflora (Yellow wood violet) protein is Cyclotide vibi-H.